Reading from the N-terminus, the 603-residue chain is Probable NOT transcription complex subunit VIP2 (603 aa).

Polar residues-rich tracts occupy residues 1-28 and 36-70; these read MQGT…NNLS and NLPS…PGYS. 4 disordered regions span residues 1-70, 212-242, 306-335, and 355-377; these read MQGT…PGYS, NDGS…LGSL, AGFN…GGVS, and SSHS…PLNS. Positions 312–335 are enriched in polar residues; that stretch reads GTYSSNRPQQQLQHAPSVSSGGVS.

This sequence belongs to the CNOT2/3/5 family. Binds to VIP1. Interacts with Agrobacterium tumefaciens VirE2. Forms a complex made of Agrobacterium VirE2, VIP1, VIP2 and single-stranded DNA (ssDNA).

The protein resides in the nucleus. Functionally, transcriptional regulator required for Agrobacterium-mediated stable genetic transformation by T-DNA integration in host genome, but not for T-DNA transient expression. The chain is Probable NOT transcription complex subunit VIP2 (VIP2) from Nicotiana benthamiana.